Consider the following 876-residue polypeptide: Leucine--tRNA ligase (876 aa).

The short motif at 43–53 (PYPSGRIHMGH) is the 'HIGH' region element. The 'KMSKS' region motif lies at 632 to 636 (KMSKS). K635 contacts ATP.

This sequence belongs to the class-I aminoacyl-tRNA synthetase family.

The protein localises to the cytoplasm. The catalysed reaction is tRNA(Leu) + L-leucine + ATP = L-leucyl-tRNA(Leu) + AMP + diphosphate. The sequence is that of Leucine--tRNA ligase from Rhodopseudomonas palustris (strain TIE-1).